The primary structure comprises 176 residues: Flavodoxin-like domain-containing protein BilS (176 aa).

Its pathway is porphyrin-containing compound metabolism; protoheme degradation. Functionally, together with BilR, catalyzes reduction of mesobilirubin and/or bilirubin to urobilinogen, a key step during heme degradation. BilS is probably involved in electron transfer for the bilirubin reductase BilR. The polypeptide is Flavodoxin-like domain-containing protein BilS (Clostridioides difficile (strain CD3)).